The primary structure comprises 841 residues: GRIP1-associated protein 1 (841 aa).

The residue at position 2 (Ala2) is an N-acetylalanine. Coiled-coil stretches lie at residues 4–161 (ALSE…YGKE) and 208–641 (EQLQ…NSKS). 2 disordered regions span residues 532–551 (AEES…KQCR) and 558–580 (LKGK…EERD). Ser655, Ser666, Ser668, Ser669, Ser688, Ser690, Ser691, and Ser692 each carry phosphoserine. The disordered stretch occupies residues 681–706 (SSAVPARSLSSSPQAQPPRPAELSDE). The span at 682–694 (SAVPARSLSSSPQ) shows a compositional bias: low complexity. Coiled-coil stretches lie at residues 701–735 (AELS…LEVS) and 785–814 (DENL…KDME).

In terms of assembly, interacts with GRIP1, GRIP2 and AMPA receptors. Interacts (via C-terminus) with MAPK8/JNK1 and MAP3K1/MEKK1; the interaction promotes MAP3K1-mediated phosphorylation of MAPK8. Interacts (via N-terminus) with RAB4A (in GTP-bound form). Interacts (via C-terminus) with STX12. Proteolytically cleaved by caspase-3. A minor C-terminal proteolytic fragment of 30 kDa is produced. Proteolytic cleavage is required for JNK signaling activation.

The protein resides in the early endosome membrane. Its subcellular location is the recycling endosome membrane. The protein localises to the cell projection. It is found in the axon. It localises to the dendrite. The protein resides in the synapse. Its function is as follows. Regulates the endosomal recycling back to the neuronal plasma membrane, possibly by connecting early and late recycling endosomal domains and promoting segregation of recycling endosomes from early endosomal membranes. Involved in the localization of recycling endosomes to dendritic spines, thereby playing a role in the maintenance of dendritic spine morphology. Required for the activity-induced AMPA receptor recycling to dendrite membranes and for long-term potentiation and synaptic plasticity. Functions as a scaffold protein to facilitate MAP3K1/MEKK1-mediated activation of the JNK1 kinase by phosphorylation, possibly by bringing MAP3K1/MEKK1 and JNK1 in close proximity. In Homo sapiens (Human), this protein is GRIP1-associated protein 1.